Here is a 540-residue protein sequence, read N- to C-terminus: Phosphoenolpyruvate carboxykinase (ATP) (540 aa).

Substrate is bound at residue arginine 65. Lysine 87 carries the N6-acetyllysine modification. Residues tyrosine 207 and lysine 213 each coordinate substrate. ATP-binding positions include lysine 213, histidine 232, and glycine 248 to threonine 256. Residues lysine 213 and histidine 232 each contribute to the Mn(2+) site. Aspartate 269 is a binding site for Mn(2+). ATP-binding positions include glutamate 297, arginine 333, arginine 449 to isoleucine 450, and threonine 455. Arginine 333 contacts substrate. The residue at position 523 (lysine 523) is an N6-acetyllysine.

This sequence belongs to the phosphoenolpyruvate carboxykinase (ATP) family. In terms of assembly, monomer. The cofactor is Mn(2+).

It localises to the cytoplasm. It catalyses the reaction oxaloacetate + ATP = phosphoenolpyruvate + ADP + CO2. The protein operates within carbohydrate biosynthesis; gluconeogenesis. Its function is as follows. Involved in the gluconeogenesis. Catalyzes the conversion of oxaloacetate (OAA) to phosphoenolpyruvate (PEP) through direct phosphoryl transfer between the nucleoside triphosphate and OAA. This is Phosphoenolpyruvate carboxykinase (ATP) from Escherichia coli O7:K1 (strain IAI39 / ExPEC).